Here is a 239-residue protein sequence, read N- to C-terminus: 1-(5-phosphoribosyl)-5-[(5-phosphoribosylamino)methylideneamino] imidazole-4-carboxamide isomerase (239 aa).

Catalysis depends on Asp-8, which acts as the Proton acceptor. Asp-129 serves as the catalytic Proton donor.

It belongs to the HisA/HisF family.

It is found in the cytoplasm. The catalysed reaction is 1-(5-phospho-beta-D-ribosyl)-5-[(5-phospho-beta-D-ribosylamino)methylideneamino]imidazole-4-carboxamide = 5-[(5-phospho-1-deoxy-D-ribulos-1-ylimino)methylamino]-1-(5-phospho-beta-D-ribosyl)imidazole-4-carboxamide. The protein operates within amino-acid biosynthesis; L-histidine biosynthesis; L-histidine from 5-phospho-alpha-D-ribose 1-diphosphate: step 4/9. The chain is 1-(5-phosphoribosyl)-5-[(5-phosphoribosylamino)methylideneamino] imidazole-4-carboxamide isomerase from Bacillus thuringiensis (strain Al Hakam).